A 400-amino-acid chain; its full sequence is Tryptophan--tRNA ligase, cytoplasmic (400 aa).

The 'HIGH' region signature appears at 95-104; the sequence is PSSGSLHFGH. The short motif at 281–285 is the 'KMSKS' region element; sequence KMSAS.

It belongs to the class-I aminoacyl-tRNA synthetase family.

It is found in the cytoplasm. It catalyses the reaction tRNA(Trp) + L-tryptophan + ATP = L-tryptophyl-tRNA(Trp) + AMP + diphosphate + H(+). In Dictyostelium discoideum (Social amoeba), this protein is Tryptophan--tRNA ligase, cytoplasmic (trpS).